The primary structure comprises 410 residues: Ribosomal RNA large subunit methyltransferase G (410 aa).

Belongs to the methyltransferase superfamily. RlmG family.

It is found in the cytoplasm. The enzyme catalyses guanosine(1835) in 23S rRNA + S-adenosyl-L-methionine = N(2)-methylguanosine(1835) in 23S rRNA + S-adenosyl-L-homocysteine + H(+). Its function is as follows. Specifically methylates the guanine in position 1835 (m2G1835) of 23S rRNA. The protein is Ribosomal RNA large subunit methyltransferase G of Alteromonas mediterranea (strain DSM 17117 / CIP 110805 / LMG 28347 / Deep ecotype).